Here is a 290-residue protein sequence, read N- to C-terminus: Protein-glutamine deamidase Cif (290 aa).

A disordered region spans residues 1–26 (MKISPNTISPSQSDPRMSTNVSQRSR). Catalysis depends on residues C117, H173, and Q193.

Belongs to the Cif family.

The protein resides in the secreted. Its subcellular location is the host nucleus. It catalyses the reaction L-glutaminyl-[protein] + H2O = L-glutamyl-[protein] + NH4(+). In terms of biological role, protein-glutamine deamidase effector that inhibits the host cell cycle and other key cellular processes such as the actin network and programmed-cell death. Acts by mediating the side chain deamidation of 'Gln-40' of host NEDD8, converting it to glutamate, thereby abolishing the activity of cullin-RING-based E3 ubiquitin-protein ligase complexes (CRL complexes). Inactivation of CRL complexes prevents ubiquitination and subsequent degradation of the cyclin-dependent kinase inhibitors CDKN1A/p21 and CDKN1B/p27, leading to G1 and G2 cell cycle arrests in host cells. Also able to catalyze deamidation of 'Gln-40' of host ubiquitin in vitro; however, NEDD8 constitutes the preferred substrate in vivo. The chain is Protein-glutamine deamidase Cif from Yersinia pseudotuberculosis serotype O:3 (strain YPIII).